We begin with the raw amino-acid sequence, 481 residues long: 7-deoxyloganetin glucosyltransferase (481 aa).

H22 functions as the Proton acceptor in the catalytic mechanism. Position 22 (H22) interacts with an anthocyanidin. D126 (charge relay) is an active-site residue. Positions 148, 363, 378, 381, 382, 383, and 386 each coordinate UDP-alpha-D-glucose. A401 serves as a coordination point for an anthocyanidin. UDP-alpha-D-glucose is bound by residues E402 and Q403.

It belongs to the UDP-glycosyltransferase family. Ubiquitous. Very low expression in stems.

The enzyme catalyses 7-deoxyloganetin + UDP-alpha-D-glucose = 7-deoxyloganin + UDP + H(+). Its function is as follows. Iridoid glucosyltransferase acting on genipin and 7-deoxyloganetin. No activity with 7-deoxyloganetic acid. Involved in geniposide biosynthesis. The chain is 7-deoxyloganetin glucosyltransferase (UGT85A24) from Gardenia jasminoides (Cape jasmine).